The primary structure comprises 318 residues: MSVLLIALFSLILLLALLGAAGVFTWGERRLLGFLQERLGPNRVGPFGFLQWVADTLKLLTKEDAPPAGADLAAYRLAPALAAFPMLAGFGVVAFAPRLVISDLDVGVLFVMGMLALTVWALVLGAWGSRNRYAMLGGLRAAAQMLAYESFLGLSLMGCVLLAGSFRMGDIVAAQEGGLWFILLQPLGAALFFLAGLAAAHRLPFDLQESEQDLVAGFMTEYSGMSFALFFLGEYLAILLVAALFTTLFLGGWAGPILPGPVWFGLKVAAISVVFVWLRAALPRPRYDQLISFAWKVALPLALLNLLVTAWIAVGRAA.

A run of 9 helical transmembrane segments spans residues 4 to 24 (LLIA…AGVF), 77 to 97 (LAPA…AFAP), 106 to 126 (VGVL…VLGA), 146 to 166 (LAYE…AGSF), 179 to 199 (LWFI…GLAA), 214 to 234 (LVAG…FLGE), 238 to 258 (ILLV…GPIL), 262 to 282 (VWFG…RAAL), and 293 to 313 (FAWK…AWIA).

This sequence belongs to the complex I subunit 1 family. As to quaternary structure, NDH-1 is composed of 14 different subunits. Subunits NuoA, H, J, K, L, M, N constitute the membrane sector of the complex.

Its subcellular location is the cell inner membrane. It catalyses the reaction a quinone + NADH + 5 H(+)(in) = a quinol + NAD(+) + 4 H(+)(out). Its function is as follows. NDH-1 shuttles electrons from NADH, via FMN and iron-sulfur (Fe-S) centers, to quinones in the respiratory chain. The immediate electron acceptor for the enzyme in this species is believed to be ubiquinone. Couples the redox reaction to proton translocation (for every two electrons transferred, four hydrogen ions are translocated across the cytoplasmic membrane), and thus conserves the redox energy in a proton gradient. This subunit may bind ubiquinone. The protein is NADH-quinone oxidoreductase subunit H 2 of Cereibacter sphaeroides (strain ATCC 17029 / ATH 2.4.9) (Rhodobacter sphaeroides).